A 298-amino-acid polypeptide reads, in one-letter code: ATP synthase gamma chain (298 aa).

This sequence belongs to the ATPase gamma chain family. In terms of assembly, F-type ATPases have 2 components, CF(1) - the catalytic core - and CF(0) - the membrane proton channel. CF(1) has five subunits: alpha(3), beta(3), gamma(1), delta(1), epsilon(1). CF(0) has three main subunits: a, b and c.

Its subcellular location is the cell inner membrane. Its function is as follows. Produces ATP from ADP in the presence of a proton gradient across the membrane. The gamma chain is believed to be important in regulating ATPase activity and the flow of protons through the CF(0) complex. The polypeptide is ATP synthase gamma chain (Wolinella succinogenes (strain ATCC 29543 / DSM 1740 / CCUG 13145 / JCM 31913 / LMG 7466 / NCTC 11488 / FDC 602W) (Vibrio succinogenes)).